The sequence spans 82 residues: Large ribosomal subunit protein bL31B (82 aa).

This sequence belongs to the bacterial ribosomal protein bL31 family. Type B subfamily. In terms of assembly, part of the 50S ribosomal subunit.

The polypeptide is Large ribosomal subunit protein bL31B (Pectobacterium carotovorum subsp. carotovorum (strain PC1)).